We begin with the raw amino-acid sequence, 714 residues long: Phosphoribosylformylglycinamidine synthase subunit PurL (714 aa).

His34 is an active-site residue. Tyr37 contributes to the ATP binding site. Mg(2+) is bound at residue Glu78. Substrate-binding positions include 79–82 and Arg101; that span reads SHNH. His80 serves as the catalytic Proton acceptor. A Mg(2+)-binding site is contributed by Asp102. Gln226 contacts substrate. Residue Asp254 coordinates Mg(2+). A substrate-binding site is contributed by 298-300; sequence ESQ. ATP is bound by residues Asp474 and Gly511. Asn512 is a binding site for Mg(2+). Ser514 provides a ligand contact to substrate.

This sequence belongs to the FGAMS family. In terms of assembly, monomer. Part of the FGAM synthase complex composed of 1 PurL, 1 PurQ and 2 PurS subunits.

Its subcellular location is the cytoplasm. The enzyme catalyses N(2)-formyl-N(1)-(5-phospho-beta-D-ribosyl)glycinamide + L-glutamine + ATP + H2O = 2-formamido-N(1)-(5-O-phospho-beta-D-ribosyl)acetamidine + L-glutamate + ADP + phosphate + H(+). It participates in purine metabolism; IMP biosynthesis via de novo pathway; 5-amino-1-(5-phospho-D-ribosyl)imidazole from N(2)-formyl-N(1)-(5-phospho-D-ribosyl)glycinamide: step 1/2. Part of the phosphoribosylformylglycinamidine synthase complex involved in the purines biosynthetic pathway. Catalyzes the ATP-dependent conversion of formylglycinamide ribonucleotide (FGAR) and glutamine to yield formylglycinamidine ribonucleotide (FGAM) and glutamate. The FGAM synthase complex is composed of three subunits. PurQ produces an ammonia molecule by converting glutamine to glutamate. PurL transfers the ammonia molecule to FGAR to form FGAM in an ATP-dependent manner. PurS interacts with PurQ and PurL and is thought to assist in the transfer of the ammonia molecule from PurQ to PurL. This chain is Phosphoribosylformylglycinamidine synthase subunit PurL, found in Methanothermobacter thermautotrophicus (strain ATCC 29096 / DSM 1053 / JCM 10044 / NBRC 100330 / Delta H) (Methanobacterium thermoautotrophicum).